A 331-amino-acid chain; its full sequence is Pyruvate synthase subunit PorB (331 aa).

4 residues coordinate [4Fe-4S] cluster: Cys21, Cys24, Cys59, and Cys222.

Heterotetramer of one alpha, one beta, one delta and one gamma chain. [4Fe-4S] cluster serves as cofactor.

It carries out the reaction 2 oxidized [2Fe-2S]-[ferredoxin] + pyruvate + CoA = 2 reduced [2Fe-2S]-[ferredoxin] + acetyl-CoA + CO2 + H(+). The polypeptide is Pyruvate synthase subunit PorB (porB) (Pyrococcus horikoshii (strain ATCC 700860 / DSM 12428 / JCM 9974 / NBRC 100139 / OT-3)).